Reading from the N-terminus, the 504-residue chain is Xylose import ATP-binding protein XylG (504 aa).

ABC transporter domains follow at residues 6–243 (LEMQ…VGRE) and 262–504 (VRNF…TGGK). Position 38 to 45 (38 to 45 (GENGAGKS)) interacts with ATP.

Belongs to the ABC transporter superfamily. Xylose importer (TC 3.A.1.2.4) family. The complex is composed of two ATP-binding proteins (XylG), two transmembrane proteins (XylH) and a solute-binding protein (XylF).

It is found in the cell membrane. It catalyses the reaction D-xylose(out) + ATP + H2O = D-xylose(in) + ADP + phosphate + H(+). Functionally, part of the ABC transporter complex XylFGH involved in xylose import. Responsible for energy coupling to the transport system. This chain is Xylose import ATP-binding protein XylG, found in Moorella thermoacetica (strain ATCC 39073 / JCM 9320).